Reading from the N-terminus, the 387-residue chain is 3-ketoacyl-CoA thiolase (387 aa).

Residue Cys-91 is the Acyl-thioester intermediate of the active site. Active-site proton acceptor residues include His-343 and Cys-373.

It belongs to the thiolase-like superfamily. Thiolase family. In terms of assembly, heterotetramer of two alpha chains (FadB) and two beta chains (FadA).

The protein localises to the cytoplasm. The enzyme catalyses an acyl-CoA + acetyl-CoA = a 3-oxoacyl-CoA + CoA. It functions in the pathway lipid metabolism; fatty acid beta-oxidation. Its function is as follows. Catalyzes the final step of fatty acid oxidation in which acetyl-CoA is released and the CoA ester of a fatty acid two carbons shorter is formed. In Serratia proteamaculans (strain 568), this protein is 3-ketoacyl-CoA thiolase.